A 178-amino-acid polypeptide reads, in one-letter code: UPF0228 protein MA_4223 (178 aa).

It belongs to the UPF0228 family.

This Methanosarcina acetivorans (strain ATCC 35395 / DSM 2834 / JCM 12185 / C2A) protein is UPF0228 protein MA_4223.